Here is a 288-residue protein sequence, read N- to C-terminus: Fructokinase (288 aa).

Residue T131 coordinates ATP. Residues H154, C169, H172, and C175 each contribute to the Zn(2+) site. ATP is bound by residues P183 and 231–235 (GVMNQ).

Belongs to the ROK (NagC/XylR) family. The cofactor is Mg(2+).

It catalyses the reaction D-fructose + ATP = D-fructose 6-phosphate + ADP + H(+). Its activity is regulated as follows. Inhibition by zinc ions. The sequence is that of Fructokinase (scrK) from Pediococcus pentosaceus.